The sequence spans 57 residues: Non-structural protein 3a (57 aa).

A signal peptide spans 1–22; the sequence is MIQSPTSFLIVLILLWCKLVLS.

In terms of biological role, involved in resistance to IFN. The polypeptide is Non-structural protein 3a (Avian infectious bronchitis virus (strain Portugal/322/82) (IBV)).